A 571-amino-acid polypeptide reads, in one-letter code: Mannan endo-1,4-beta-mannosidase B (571 aa).

An N-terminal signal peptide occupies residues 1–19 (MNSLSLLLFCIFFVFSTFA). Positions 22–141 (VYYEAENGKL…WMWVDAFVIN (120 aa)) constitute a CBM6 domain. A GH26 domain is found at 165 to 459 (PAAKKLYDFL…FTHKTVMNMD (295 aa)). A substrate-binding site is contributed by Trp286. Residue Glu319 is the Proton donor of the active site. Positions 324 and 379 each coordinate substrate. Catalysis depends on Glu407, which acts as the Nucleophile. 2 CBM10 domains span residues 491–527 (ECFS…CGIG) and 534–571 (VCWS…CGII).

This sequence belongs to the glycosyl hydrolase 26 family.

It catalyses the reaction Random hydrolysis of (1-&gt;4)-beta-D-mannosidic linkages in mannans, galactomannans and glucomannans.. The sequence is that of Mannan endo-1,4-beta-mannosidase B (MANB) from Piromyces sp.